A 317-amino-acid polypeptide reads, in one-letter code: Ubiquinone biosynthesis protein COQ9, mitochondrial (317 aa).

Residues 1–46 constitute a mitochondrion transit peptide; that stretch reads MAASVARVLKAAGGRQLLLMVARRRPVLRQPFLLMPRKFWGTSALR. Residues 45 to 97 form a disordered region; it reads LRSEDQKQPPFSSTSAHAGTPEHAEEQYQQQQPPPRYTDQAGEESEGYESEEQ. Over residues 85 to 96 the composition is skewed to acidic residues; the sequence is AGEESEGYESEE. Residue Arg243 participates in a 1,2-diacylglycero-3-phosphoethanolamine binding.

This sequence belongs to the COQ9 family. Homodimer. Heterodimer; two heterodimers of COQ7:COQ9 come together on the same side of the lipid pseudo-bilayer and form a curved tetramer with a hydrophobic surface suitable for membrane interaction. These two tetramers assemble into a soluble octamer with a pseudo-bilayer of lipids captured within. Interacts with COQ7; this interaction allows ubiquinone (CoQ) isoprene intermediates presentation to COQ7 and facilitates the COQ7-mediated hydroxylase step.

It is found in the mitochondrion. It participates in cofactor biosynthesis; ubiquinone biosynthesis. In terms of biological role, membrane-associated protein that warps the membrane surface to access and bind aromatic isoprenes with high specificity, including ubiquinone (CoQ) isoprene intermediates and presents them directly to COQ7, therefore facilitating the COQ7-mediated hydroxylase step. Participates in the biosynthesis of coenzyme Q, also named ubiquinone, an essential lipid-soluble electron transporter for aerobic cellular respiration. The chain is Ubiquinone biosynthesis protein COQ9, mitochondrial from Xenopus tropicalis (Western clawed frog).